The primary structure comprises 260 residues: MKDILSEIIANKRFEVDLQKQAISIEQLQEGINEVPASRSMKRALASSDSGIIAEFKRRSPSKGWIKQEARPEEIVPSYLAAGASALSILTDEKFFGGSLKDIRTARPLVDVPIIRKDFIIDEYQLYQAKIVGADAVLLIAAALKQEKCQELAEQAHELGLEVLLEIHSAEELPYINSKIDMIGINNRNLGTFFTDVENSFRLAGQLPQDAVLVSESGISDPEVVKRLRTAGFRGFLIGETFMKTPQPGETLQNFLKAIQ.

This sequence belongs to the TrpC family.

It carries out the reaction 1-(2-carboxyphenylamino)-1-deoxy-D-ribulose 5-phosphate + H(+) = (1S,2R)-1-C-(indol-3-yl)glycerol 3-phosphate + CO2 + H2O. The protein operates within amino-acid biosynthesis; L-tryptophan biosynthesis; L-tryptophan from chorismate: step 4/5. This Bacteroides thetaiotaomicron (strain ATCC 29148 / DSM 2079 / JCM 5827 / CCUG 10774 / NCTC 10582 / VPI-5482 / E50) protein is Indole-3-glycerol phosphate synthase.